Reading from the N-terminus, the 315-residue chain is Replication factor C small subunit (315 aa).

43–50 (GSPGVGKT) is a binding site for ATP.

It belongs to the activator 1 small subunits family. RfcS subfamily. In terms of assembly, heteromultimer composed of small subunits (RfcS) and large subunits (RfcL).

Part of the RFC clamp loader complex which loads the PCNA sliding clamp onto DNA. This Methanococcus vannielii (strain ATCC 35089 / DSM 1224 / JCM 13029 / OCM 148 / SB) protein is Replication factor C small subunit.